The chain runs to 102 residues: Small ribosomal subunit protein uS10 (102 aa).

The protein belongs to the universal ribosomal protein uS10 family. As to quaternary structure, part of the 30S ribosomal subunit.

Functionally, involved in the binding of tRNA to the ribosomes. This chain is Small ribosomal subunit protein uS10, found in Methanococcus maripaludis (strain C7 / ATCC BAA-1331).